We begin with the raw amino-acid sequence, 205 residues long: ATP-dependent Clp protease proteolytic subunit (205 aa).

Ser98 functions as the Nucleophile in the catalytic mechanism. Residue His123 is part of the active site.

The protein belongs to the peptidase S14 family. In terms of assembly, fourteen ClpP subunits assemble into 2 heptameric rings which stack back to back to give a disk-like structure with a central cavity, resembling the structure of eukaryotic proteasomes.

It localises to the cytoplasm. The enzyme catalyses Hydrolysis of proteins to small peptides in the presence of ATP and magnesium. alpha-casein is the usual test substrate. In the absence of ATP, only oligopeptides shorter than five residues are hydrolyzed (such as succinyl-Leu-Tyr-|-NHMec, and Leu-Tyr-Leu-|-Tyr-Trp, in which cleavage of the -Tyr-|-Leu- and -Tyr-|-Trp bonds also occurs).. Functionally, cleaves peptides in various proteins in a process that requires ATP hydrolysis. Has a chymotrypsin-like activity. Plays a major role in the degradation of misfolded proteins. This chain is ATP-dependent Clp protease proteolytic subunit, found in Desulforapulum autotrophicum (strain ATCC 43914 / DSM 3382 / VKM B-1955 / HRM2) (Desulfobacterium autotrophicum).